The primary structure comprises 302 residues: MPCRLLHQRETRSGGPRGPRHSAPTGPGWHNAPTLQSWEESHAPSRDPRDHQGSVEDTSLGGDAPADGVSPSVPPLQGLGKAAGPGGTGQAECQVVVATHRANLKPWDGRAAPLGKRTEEGRLSTSSCASVSRNKPDSVPQGDPVWPPESTGPALCAGEETEPQSSEGLAWGPWAQPWAPSLCPSQTGTASTASPQRASRLALQGPPGTILSLSSSSPCLPPSHCDPGAASSWAGLQSLKLLLQVSFQGAADGCSLRDANTNRKGPMHGSDFPPRLCLHSMSLWGSWGSRPPSPAHSREVAS.

Disordered regions lie at residues 1–167 (MPCR…QSSE) and 180–199 (PSLC…QRAS). Positions 39–54 (EESHAPSRDPRDHQGS) are enriched in basic and acidic residues. Composition is skewed to polar residues over residues 123–133 (LSTSSCASVSR) and 183–197 (CPSQ…SPQR).

This is an uncharacterized protein from Homo sapiens (Human).